The sequence spans 127 residues: Major sperm protein 152 (127 aa).

T2 carries the N-acetylthreonine modification. The MSP domain occupies 9 to 126 (DIQTQPGTKI…RRKNLPIEYN (118 aa)).

In terms of tissue distribution, sperm.

It localises to the cell projection. The protein localises to the pseudopodium. Its subcellular location is the cytoplasm. The protein resides in the cytoskeleton. Central component in molecular interactions underlying sperm crawling. Forms an extensive filament system that extends from sperm villipoda, along the leading edge of the pseudopod. The sequence is that of Major sperm protein 152 (msp-152) from Caenorhabditis elegans.